Here is a 246-residue protein sequence, read N- to C-terminus: MIWTDVPTPWGMRFQDAATPNAEGMHELYDHMMYYLALMLGLVSYMLYVMMKDYKNNTFAYKYIKHGQTLEIMWTMFPAVMLLLMAFPSFMLLYLCDEVLTPAMTVKVVGLQWYWKYEYSDFVSETGETVEYESYVMPEDMLEEGQLRLLDTDTSMVVPVDTHVRFMVTANDVLHCFTMPSLGIKVDACPGRLNQVSALMQRTGVYYGQCSELCGVNHGLMPIKTECVPIGDFVEWLGEQENVYVA.

Transmembrane regions (helical) follow at residues 31 to 51 and 72 to 92; these read HMMYYLALMLGLVSYMLYVMM and IMWTMFPAVMLLLMAFPSFML. 6 residues coordinate Cu cation: His-175, Cys-210, Glu-212, Cys-214, His-218, and Met-221. Glu-212 is a binding site for Mg(2+).

The protein belongs to the cytochrome c oxidase subunit 2 family. In terms of assembly, component of the cytochrome c oxidase (complex IV, CIV), a multisubunit enzyme composed of a catalytic core of 3 subunits and several supernumerary subunits. The complex exists as a monomer or a dimer and forms supercomplexes (SCs) in the inner mitochondrial membrane with ubiquinol-cytochrome c oxidoreductase (cytochrome b-c1 complex, complex III, CIII). Cu cation is required as a cofactor.

It is found in the mitochondrion inner membrane. It catalyses the reaction 4 Fe(II)-[cytochrome c] + O2 + 8 H(+)(in) = 4 Fe(III)-[cytochrome c] + 2 H2O + 4 H(+)(out). Its function is as follows. Component of the cytochrome c oxidase, the last enzyme in the mitochondrial electron transport chain which drives oxidative phosphorylation. The respiratory chain contains 3 multisubunit complexes succinate dehydrogenase (complex II, CII), ubiquinol-cytochrome c oxidoreductase (cytochrome b-c1 complex, complex III, CIII) and cytochrome c oxidase (complex IV, CIV), that cooperate to transfer electrons derived from NADH and succinate to molecular oxygen, creating an electrochemical gradient over the inner membrane that drives transmembrane transport and the ATP synthase. Cytochrome c oxidase is the component of the respiratory chain that catalyzes the reduction of oxygen to water. Electrons originating from reduced cytochrome c in the intermembrane space (IMS) are transferred via the dinuclear copper A center (CU(A)) of subunit 2 and heme A of subunit 1 to the active site in subunit 1, a binuclear center (BNC) formed by heme A3 and copper B (CU(B)). The BNC reduces molecular oxygen to 2 water molecules using 4 electrons from cytochrome c in the IMS and 4 protons from the mitochondrial matrix. This chain is Cytochrome c oxidase subunit 2 (COX2), found in Debaryomyces hansenii (strain ATCC 36239 / CBS 767 / BCRC 21394 / JCM 1990 / NBRC 0083 / IGC 2968) (Yeast).